A 613-amino-acid chain; its full sequence is Potassium voltage-gated channel subfamily A member 5 (613 aa).

The tract at residues 1–108 (MEIALVPLEN…EGDPGLGTVE (108 aa)) is disordered. The tract at residues 1–211 (MEIALVPLEN…FYQLGDEAME (211 aa)) is tetramerization domain. Topologically, residues 1–247 (MEIALVPLEN…LIFEYPESSG (247 aa)) are cytoplasmic. Residues 45–62 (GPKEPAPKGRGAQRDADS) are compositionally biased toward basic and acidic residues. A run of 2 repeats spans residues 61–71 (DSGVRPLPPLP) and 72–82 (DPGVRPLPPLP). The 2 X 11 AA tandem repeat of D-[SP]-G-V-R-P-L-P-P-L-P stretch occupies residues 61-82 (DSGVRPLPPLPDPGVRPLPPLP). Residues 66-83 (PLPPLPDPGVRPLPPLPE) are compositionally biased toward pro residues. A compositionally biased stretch (basic and acidic residues) spans 84–93 (ELPRPRRPPP). Residue lysine 221 forms a Glycyl lysine isopeptide (Lys-Gly) (interchain with G-Cter in SUMO) linkage. Residues 248–269 (SARAIAIVSVLVILISIITFCL) traverse the membrane as a helical segment. The Extracellular portion of the chain corresponds to 270–323 (ETLPEFRDERELLRHPPAPHQPPAPAPGANGSGVMAPPSGPTVAPLLPRTLADP). The disordered stretch occupies residues 282 to 304 (LRHPPAPHQPPAPAPGANGSGVM). Residues 285–295 (PPAPHQPPAPA) show a composition bias toward pro residues. Residues 324-345 (FFIVETTCVIWFTFELLVRFFA) traverse the membrane as a helical segment. Cysteine 346 carries the S-palmitoyl cysteine lipid modification. Residues 346–356 (CPSKAGFSRNI) are Cytoplasmic-facing. A helical membrane pass occupies residues 357 to 377 (MNIIDVVAIFPYFITLGTELA). At 378-395 (EQQPGGGGGGQNGQQAMS) the chain is on the extracellular side. The chain crosses the membrane as a helical; Voltage-sensor span at residues 396–416 (LAILRVIRLVRVFRIFKLSRH). The Cytoplasmic segment spans residues 417-431 (SKGLQILGKTLQASM). The tract at residues 418-431 (KGLQILGKTLQASM) is S4-S5 linker. The chain crosses the membrane as a helical span at residues 432–453 (RELGLLIFFLFIGVILFSSAVY). At 454-467 (FAEADNQGTHFSSI) the chain is on the extracellular side. Residues 468–479 (PDAFWWAVVTMT) constitute an intramembrane region (helical). The short motif at 480–485 (TVGYGD) is the Selectivity filter element. Residues 480–487 (TVGYGDMR) lie within the membrane without spanning it. The Extracellular portion of the chain corresponds to 488-494 (PITVGGK). Residues 495-523 (IVGSLCAIAGVLTIALPVPVIVSNFNYFY) traverse the membrane as a helical segment. Topologically, residues 524–613 (HRETDHEEPA…CLDTSRETDL (90 aa)) are cytoplasmic. Positions 532–559 (PAVLKEEQGTQSQGPGLDRGVQRKVSGS) are disordered. Lysine 536 is covalently cross-linked (Glycyl lysine isopeptide (Lys-Gly) (interchain with G-Cter in SUMO)). Serine 557 carries the phosphoserine; by PKA modification. Residues 611 to 613 (TDL) carry the PDZ-binding motif.

The protein belongs to the potassium channel family. A (Shaker) (TC 1.A.1.2) subfamily. Kv1.5/KCNA5 sub-subfamily. As to quaternary structure, homotetramer and heterotetramer of potassium channel proteins. Interacts with DLG1, which enhances channel currents. Forms a ternary complex with DLG1 and CAV3. Interacts with KCNAB1. Interacts with UBE2I. Interacts with XIRP2; the interaction is required for normal action potential configuration in the heart. Post-translationally, glycosylated. In terms of processing, sumoylated on Lys-221, and Lys-536, preferentially with SUMO3. Sumoylation regulates the voltage sensitivity of the channel. As to expression, pancreatic islets and insulinoma.

The protein localises to the cell membrane. It catalyses the reaction K(+)(in) = K(+)(out). Its activity is regulated as follows. Inhibited by 4-aminopyridine, nicotine, bepridil, correolide, and endothelin-1. In terms of biological role, voltage-gated potassium channel that mediates transmembrane potassium transport in excitable membranes. Forms tetrameric potassium-selective channels through which potassium ions pass in accordance with their electrochemical gradient. The channel alternates between opened and closed conformations in response to the voltage difference across the membrane. Can form functional homotetrameric channels and heterotetrameric channels that contain variable proportions of KCNA1, KCNA2, KCNA4, KCNA5, and possibly other family members as well; channel properties depend on the type of alpha subunits that are part of the channel. Channel properties are modulated by cytoplasmic beta subunits that regulate the subcellular location of the alpha subunits and promote rapid inactivation. Homotetrameric channels display rapid activation and slow inactivation. Required for normal electrical conduction including formation of the infranodal ventricular conduction system and normal action potential configuration, as a result of its interaction with XIRP2. May play a role in regulating the secretion of insulin in normal pancreatic islets. Its function is as follows. Exhibits a faster depolarization rate, reduced voltage-dependent recovery from inactivation and an excessive cumulative inactivation. The polypeptide is Potassium voltage-gated channel subfamily A member 5 (KCNA5) (Homo sapiens (Human)).